A 91-amino-acid chain; its full sequence is Potassium channel toxin AaTXK-beta (91 aa).

Positions 1 to 19 are cleaved as a signal peptide; it reads MQRNLVVLLFLGMVALSSC. Residues 20–27 constitute a propeptide that is removed on maturation; sequence GLREKHVQ. Residues 54–91 form the BetaSPN-type CS-alpha/beta domain; it reads QFGCPAYQGYCDDHCQDIKKEEGFCHGFKCKCGIPMGF. Intrachain disulfides connect cysteine 57/cysteine 78, cysteine 64/cysteine 83, and cysteine 68/cysteine 85.

Belongs to the long chain scorpion toxin family. Class 1 subfamily. In terms of assembly, monomer (both chains). As to expression, expressed by the venom gland.

Its subcellular location is the secreted. Inhibits voltage-gated potassium channels (Kv). Does not activate Kv7 channels. Its function is as follows. Peptide activator of Kv7.4/KCNQ4 channels. Also acts as a subtype-selective activator of channels formed by Kv7.3/KCNQ3, Kv7.2/Kv7.3 (KCNQ2/KCNQ3), Kv7.5/Kv7.3 (KCNQ3/KCNQ5) subunits. The chain is Potassium channel toxin AaTXK-beta from Androctonus australis (Sahara scorpion).